Reading from the N-terminus, the 200-residue chain is Probable molybdenum cofactor guanylyltransferase (200 aa).

Residues 9–11 (LAG), lysine 21, aspartate 69, and aspartate 100 each bind GTP. Position 100 (aspartate 100) interacts with Mg(2+).

This sequence belongs to the MobA family. It depends on Mg(2+) as a cofactor.

Its subcellular location is the cytoplasm. The catalysed reaction is Mo-molybdopterin + GTP + H(+) = Mo-molybdopterin guanine dinucleotide + diphosphate. In terms of biological role, transfers a GMP moiety from GTP to Mo-molybdopterin (Mo-MPT) cofactor (Moco or molybdenum cofactor) to form Mo-molybdopterin guanine dinucleotide (Mo-MGD) cofactor. This Bacillus thuringiensis (strain Al Hakam) protein is Probable molybdenum cofactor guanylyltransferase.